We begin with the raw amino-acid sequence, 116 residues long: Galanin-like peptide (116 aa).

Positions 1 to 24 (MAPPSVPLVLLLVLLLSLAETPAS) are cleaved as a signal peptide. Positions 87–116 (NVMETFAKPEIGDLGMLSMKIPKEEDVLKS) are excised as a propeptide.

The protein belongs to the galanin family. Isoform 2 is found in ganglia of ganglioneuroma and ganglioneuroblastoma, as well as in differentiated tumor cells of neuroblastoma tissues. Not found in undifferentiated neuroblasts. Isoform 2 is found in the skin, in pericytes covering microvascular arterioles and venules on their abluminal surfaces. In larger vessels, isoform 2 is expressed in layers of smooth muscle cells. Isoform 2 is not detected in endothelial cells.

The protein localises to the secreted. Hypothalamic neuropeptide which binds to the G-protein-coupled galanin receptors (GALR1, GALR2 and GALR3). Involved in a large number of putative physiological functions in CNS homeostatic processes, including the regulation of gonadotropin-releasing hormone secretion. Functionally, exhibits potent and dose-dependent vasoconstrictor and anti-edema activity in the cutaneous microvasculature, a physiologic effects which does not appear to be mediated via GALR1 or GALR2. Exhibits antimicrobial activity against Gram-negative bacterias, inducing bacterial membrane blebbing. The protein is Galanin-like peptide (GALP) of Homo sapiens (Human).